Here is a 298-residue protein sequence, read N- to C-terminus: Inosose dehydratase 2 (298 aa).

This sequence belongs to the IolE/MocC family. Glutathione is required as a cofactor. Co(2+) serves as cofactor. It depends on Mn(2+) as a cofactor.

It catalyses the reaction scyllo-inosose = 3D-3,5/4-trihydroxycyclohexane-1,2-dione + H2O. The protein operates within polyol metabolism; myo-inositol degradation into acetyl-CoA; acetyl-CoA from myo-inositol: step 2/7. Functionally, catalyzes the dehydration of inosose (2-keto-myo-inositol, 2KMI or 2,4,6/3,5-pentahydroxycyclohexanone) to 3D-(3,5/4)-trihydroxycyclohexane-1,2-dione (D-2,3-diketo-4-deoxy-epi-inositol). This chain is Inosose dehydratase 2, found in Bacillus cereus (strain ZK / E33L).